The chain runs to 238 residues: Probable xyloglucan-specific endo-beta-1,4-glucanase A (238 aa).

Residues Met-1–Ala-18 form the signal peptide. Asn-106 and Asn-171 each carry an N-linked (GlcNAc...) asparagine glycan.

It belongs to the glycosyl hydrolase 12 (cellulase H) family.

Its subcellular location is the secreted. The catalysed reaction is xyloglucan + H2O = xyloglucan oligosaccharides.. In terms of biological role, catalyzes endohydrolysis of 1,4-beta-D-glucosidic linkages in xyloglucan with retention of the beta-configuration of the glycosyl residues. Specific for xyloglucan and does not hydrolyze other cell wall components. The protein is Probable xyloglucan-specific endo-beta-1,4-glucanase A (xgeA) of Aspergillus fumigatus (strain ATCC MYA-4609 / CBS 101355 / FGSC A1100 / Af293) (Neosartorya fumigata).